The primary structure comprises 469 residues: Ubiquitin carboxyl-terminal hydrolase MINDY-1 (469 aa).

The segment at methionine 1–leucine 85 is disordered. The span at histidine 34–alanine 53 shows a compositional bias: basic and acidic residues. Serine 103 carries the phosphoserine modification. The active-site Nucleophile is cysteine 137. The active-site Proton acceptor is the histidine 319. Positions glutamine 388–glutamine 426 are ubiquitin-binding domain (UBD). The interval glutamine 428–leucine 469 is disordered. Serine 441 bears the Phosphoserine mark. Positions alanine 453–leucine 469 are enriched in basic and acidic residues.

Belongs to the MINDY deubiquitinase family. FAM63 subfamily.

It carries out the reaction Thiol-dependent hydrolysis of ester, thioester, amide, peptide and isopeptide bonds formed by the C-terminal Gly of ubiquitin (a 76-residue protein attached to proteins as an intracellular targeting signal).. Hydrolase that can specifically remove 'Lys-48'-linked conjugated ubiquitin from proteins. Has exodeubiquitinase activity and has a preference for long polyubiquitin chains. May play a regulatory role at the level of protein turnover. The polypeptide is Ubiquitin carboxyl-terminal hydrolase MINDY-1 (MINDY1) (Pongo abelii (Sumatran orangutan)).